Here is a 696-residue protein sequence, read N- to C-terminus: MIDQNKHQQLRIGLASPEQICAWSEKILPNGEIVGQVTKPHTLHYETNKPERDGSFCERIFGPIKSGVCSCGNSPGIGNEKIDAKFCTQCGVEFVDSRIRRYQMGYIKLACPVVHVWYLKRLPSYIANLLAKTRKELEGPVYCDLFLARPIANKPTLLRSRGTFDYEIQSWREIIPHYLSARPYYLFPRGSGTFKEREIATGGDAIGKQLMGLDLQMIIDRSHMEWKNLVELKWNRLEENQESTVDRWEDEKIRRRKDFLVGRMKLAKHFLRTNIEPKWMVLCLLPVLPPEPRPIVQLGEGGLITSSDLNELYRRVINRNNTLTNLLARSGSESFVIYQTKLIQEAVDALLDNGICRQPMRDSHNRPYKSFSDVIEGKEGRFRENLLGKRVDYSGRSVIVVGPFLSLYQCGLPSEIAIELFQAFLIRSLIGRHIAPNLRTAKSMIRDKGPIVWEVLQEVMQGHPILLNRAPTLHKLGIQAFQPILVEGRAIRLHPSVCGGFNADFDGDQMAVHVPLSLEARAEARLLMFSETNLLSPAIGDPISIPTQDMLLGLYISTVQNSQGIYGNRYHPYHSENKSFSCKKPSFYSYDDVLRAYRQKRIDLYSPLWLRWGEVDLRIITSVNQEAPIEVQYESLGTFHEIHEHYRIRKGRMGEILNIYIRTTVGRTRFNREMEEAIQGFACSEHPNKSLPALRI.

Zn(2+)-binding residues include Cys-69, Cys-71, Cys-87, and Cys-90. Mg(2+) contacts are provided by Asp-504, Asp-506, and Asp-508.

Belongs to the RNA polymerase beta' chain family. RpoC1 subfamily. In plastids the minimal PEP RNA polymerase catalytic core is composed of four subunits: alpha, beta, beta', and beta''. When a (nuclear-encoded) sigma factor is associated with the core the holoenzyme is formed, which can initiate transcription. Mg(2+) serves as cofactor. The cofactor is Zn(2+).

It is found in the plastid. The protein localises to the chloroplast. The catalysed reaction is RNA(n) + a ribonucleoside 5'-triphosphate = RNA(n+1) + diphosphate. DNA-dependent RNA polymerase catalyzes the transcription of DNA into RNA using the four ribonucleoside triphosphates as substrates. The polypeptide is DNA-directed RNA polymerase subunit beta' (Pinus thunbergii (Japanese black pine)).